The sequence spans 485 residues: Alpha,alpha-trehalose-phosphate synthase [UDP-forming] (485 aa).

D-glucose 6-phosphate is bound by residues tyrosine 99 and aspartate 153. The UDP site is built by arginine 290 and lysine 295. Positions 290 and 295 each coordinate UDP-alpha-D-glucose. Arginine 328 is a binding site for D-glucose 6-phosphate. UDP-binding positions include isoleucine 367 and 393–397; that span reads LVSYE. UDP-alpha-D-glucose-binding positions include isoleucine 367 and 389 to 397; that span reads DGMNLVSYE.

This sequence belongs to the glycosyltransferase 20 family.

The enzyme catalyses D-glucose 6-phosphate + UDP-alpha-D-glucose = alpha,alpha-trehalose 6-phosphate + UDP + H(+). It functions in the pathway carbohydrate biosynthesis. Its function is as follows. Synthase catalytic subunit of the trehalose synthase complex that catalyzes the production of trehalose from glucose-6-phosphate and UDP-alpha-D-glucose in a two step process. This is Alpha,alpha-trehalose-phosphate synthase [UDP-forming] from Zygosaccharomyces rouxii.